A 61-amino-acid chain; its full sequence is uncharacterized protein (61 aa).

Residues 38 to 61 are disordered; it reads TPRPFTPGLADPRRLGPRRVQAAQ.

This is an uncharacterized protein from Homo sapiens (Human).